A 190-amino-acid chain; its full sequence is Holliday junction branch migration complex subunit RuvA (190 aa).

The interval 1–64 (MIGKLTGTLL…EDAQLLYGFG (64 aa)) is domain I. Residues 65–137 (TAQERQAFRE…LKGKLGADVG (73 aa)) form a domain II region. The tract at residues 137 to 141 (GVRAH) is flexible linker. The tract at residues 142–190 (AANDNQADILQALLALGYNDKEAAAALKALPADVGVSEGIKLALKSLSK) is domain III.

It belongs to the RuvA family. In terms of assembly, homotetramer. Forms an RuvA(8)-RuvB(12)-Holliday junction (HJ) complex. HJ DNA is sandwiched between 2 RuvA tetramers; dsDNA enters through RuvA and exits via RuvB. An RuvB hexamer assembles on each DNA strand where it exits the tetramer. Each RuvB hexamer is contacted by two RuvA subunits (via domain III) on 2 adjacent RuvB subunits; this complex drives branch migration. In the full resolvosome a probable DNA-RuvA(4)-RuvB(12)-RuvC(2) complex forms which resolves the HJ.

Its subcellular location is the cytoplasm. Functionally, the RuvA-RuvB-RuvC complex processes Holliday junction (HJ) DNA during genetic recombination and DNA repair, while the RuvA-RuvB complex plays an important role in the rescue of blocked DNA replication forks via replication fork reversal (RFR). RuvA specifically binds to HJ cruciform DNA, conferring on it an open structure. The RuvB hexamer acts as an ATP-dependent pump, pulling dsDNA into and through the RuvAB complex. HJ branch migration allows RuvC to scan DNA until it finds its consensus sequence, where it cleaves and resolves the cruciform DNA. The sequence is that of Holliday junction branch migration complex subunit RuvA from Acidovorax ebreus (strain TPSY) (Diaphorobacter sp. (strain TPSY)).